The following is a 329-amino-acid chain: Succinylglutamate desuccinylase (329 aa).

Zn(2+) contacts are provided by histidine 53, glutamate 56, and histidine 148. Glutamate 211 is an active-site residue.

Belongs to the AspA/AstE family. Succinylglutamate desuccinylase subfamily. Zn(2+) serves as cofactor.

The catalysed reaction is N-succinyl-L-glutamate + H2O = L-glutamate + succinate. The protein operates within amino-acid degradation; L-arginine degradation via AST pathway; L-glutamate and succinate from L-arginine: step 5/5. Functionally, transforms N(2)-succinylglutamate into succinate and glutamate. The chain is Succinylglutamate desuccinylase from Erwinia tasmaniensis (strain DSM 17950 / CFBP 7177 / CIP 109463 / NCPPB 4357 / Et1/99).